A 163-amino-acid polypeptide reads, in one-letter code: Ribosome maturation factor RimM (163 aa).

A PRC barrel domain is found at 92 to 162 (EDEFYVADLV…AGRAVVRPPE (71 aa)).

The protein belongs to the RimM family. As to quaternary structure, binds ribosomal protein uS19.

The protein resides in the cytoplasm. In terms of biological role, an accessory protein needed during the final step in the assembly of 30S ribosomal subunit, possibly for assembly of the head region. Essential for efficient processing of 16S rRNA. May be needed both before and after RbfA during the maturation of 16S rRNA. It has affinity for free ribosomal 30S subunits but not for 70S ribosomes. The sequence is that of Ribosome maturation factor RimM from Rubrobacter xylanophilus (strain DSM 9941 / JCM 11954 / NBRC 16129 / PRD-1).